A 348-amino-acid polypeptide reads, in one-letter code: Dihydroorotase (348 aa).

Positions 14 and 16 each coordinate Zn(2+). Residues His16 to Arg18 and Asn42 each bind substrate. 3 residues coordinate Zn(2+): Lys100, His137, and His175. Lys100 bears the N6-carboxylysine mark. His137 contributes to the substrate binding site. Residue Leu220 participates in substrate binding. Position 248 (Asp248) interacts with Zn(2+). Asp248 is a catalytic residue. Positions 252 and 264 each coordinate substrate.

This sequence belongs to the metallo-dependent hydrolases superfamily. DHOase family. Class II DHOase subfamily. In terms of assembly, homodimer. Zn(2+) is required as a cofactor.

It catalyses the reaction (S)-dihydroorotate + H2O = N-carbamoyl-L-aspartate + H(+). It functions in the pathway pyrimidine metabolism; UMP biosynthesis via de novo pathway; (S)-dihydroorotate from bicarbonate: step 3/3. Catalyzes the reversible cyclization of carbamoyl aspartate to dihydroorotate. The polypeptide is Dihydroorotase (Ectopseudomonas mendocina (strain ymp) (Pseudomonas mendocina)).